The sequence spans 515 residues: Membrane-bound transcription factor site-2 protease (515 aa).

Residues 1-3 (MIP) are Cytoplasmic-facing. A helical membrane pass occupies residues 4-24 (VSLLVVVVGGWTAVYLADLVL). The Lumenal portion of the chain corresponds to 25-74 (KSSVYFKHSYEDWLENNGLSISPFHIRWQTSIFNRAFYSWGRRKARMLYQ). 2 helical membrane-spanning segments follow: residues 75–95 (WFNFGMVFGVIAMFSSFFLLG) and 96–107 (KTLMQTLAQMMA). Topologically, residues 108 to 140 (DSPSPYSSSSSSSSSSSSSSSSSSSLHNEQVLQ) are lumenal. A helical transmembrane segment spans residues 141–165 (VVVPGINLPVNQLTYFFAAVLISGV). His-167 contacts Zn(2+). Glu-168 is a catalytic residue. Helical transmembrane passes span 170-182 (GHGIAAIREQVRF), 183-205 (NGFGIFLFIIYPGAFVDLFTTHL), and 225-247 (FVLALLGILALVLLPVILLPFYY). His-171 contacts Zn(2+). At 248-442 (TGVGVLITEV…LPVIVETFVK (195 aa)) the chain is on the lumenal side. Asn-333 is a glycosylation site (N-linked (GlcNAc...) asparagine). The next 2 helical transmembrane spans lie at 443 to 460 (YLISLSGALAIVNAVPCF) and 461 to 472 (ALDGQWILNSFL). Over 473-488 (DATLTSVIGDNDVKDL) the chain is Lumenal. The helical transmembrane segment at 489–509 (IGFFILLGGSVLLAANVTLGL) threads the bilayer. At 510–515 (WMVTAR) the chain is on the cytoplasmic side.

The protein belongs to the peptidase M50A family. Zn(2+) serves as cofactor.

The protein localises to the membrane. The protein resides in the cytoplasm. It localises to the golgi apparatus membrane. It catalyses the reaction Cleaves several transcription factors that are type-2 transmembrane proteins within membrane-spanning domains. Known substrates include sterol regulatory element-binding protein (SREBP) -1, SREBP-2 and forms of the transcriptional activator ATF6. SREBP-2 is cleaved at the site 477-DRSRILL-|-CVLTFLCLSFNPLTSLLQWGGA-505. The residues Asn-Pro, 11 residues distal to the site of cleavage in the membrane-spanning domain, are important for cleavage by S2P endopeptidase. Replacement of either of these residues does not prevent cleavage, but there is no cleavage if both of these residues are replaced.. Functionally, zinc metalloprotease that mediates intramembrane proteolysis of proteins such as ATF6, ATF6B, SREBF1/SREBP1 and SREBF2/SREBP2. Catalyzes the second step in the proteolytic activation of the sterol regulatory element-binding proteins (SREBPs) SREBF1/SREBP1 and SREBF2/SREBP2: cleaves SREBPs within the first transmembrane segment, thereby releasing the N-terminal segment with a portion of the transmembrane segment attached. Mature N-terminal SREBP fragments shuttle to the nucleus and activate gene transcription. Also mediates the second step in the proteolytic activation of the cyclic AMP-dependent transcription factor ATF-6 (ATF6 and ATF6B). Involved in intramembrane proteolysis during bone formation. In astrocytes and osteoblasts, upon DNA damage and ER stress, mediates the second step of the regulated intramembrane proteolytic activation of the transcription factor CREB3L1, leading to the inhibition of cell-cycle progression. The polypeptide is Membrane-bound transcription factor site-2 protease (Mbtps2) (Mus musculus (Mouse)).